The primary structure comprises 105 residues: Small ribosomal subunit protein uS17 (105 aa).

This sequence belongs to the universal ribosomal protein uS17 family. In terms of assembly, part of the 30S ribosomal subunit.

One of the primary rRNA binding proteins, it binds specifically to the 5'-end of 16S ribosomal RNA. The protein is Small ribosomal subunit protein uS17 of Thermus thermophilus (strain ATCC BAA-163 / DSM 7039 / HB27).